The following is a 590-amino-acid chain: Oleate hydratase (590 aa).

Residues A33, E56, S64, and E82 each contribute to the FAD site. The active-site Proton acceptor is the E82. The active-site Proton donor is Y200. FAD-binding residues include V249, S291, T508, and S512.

Belongs to the oleate hydratase family. In terms of assembly, monomer and homodimer. Both forms seem to be active. It depends on FAD as a cofactor.

It catalyses the reaction (R)-10-hydroxyoctadecanoate = (9Z)-octadecenoate + H2O. The catalysed reaction is (9Z)-octadecenoate + H2O = 10-hydroxyoctadecanoate. It carries out the reaction (9Z)-hexadecenoate + H2O = 10-hydroxyhexadecanoate. The enzyme catalyses (9Z,12Z)-octadecadienoate + H2O = (12Z)-10-hydroxyoctadecenoate. It catalyses the reaction (12Z)-10-hydroxyoctadecenoate + H2O = 10,13-dihydroxyoctadecanoate. The catalysed reaction is (9Z,12Z,15Z)-octadecatrienoate + H2O = (12Z,15Z)-10-hydroxyoctadecadienoate. Its pathway is lipid metabolism; fatty acid metabolism. Its function is as follows. Catalyzes the hydration of oleate at its cis-9-double bond to yield 10-hydroxyoctadecanoate, probably in the (R) configuration, and of linoleate at its cis-9- and cis-12-double bond to yield 10-hydroxy-12-octadecenoate and 10,13-dihydroxyoctadecanoate. Is not active on trans-double bonds and esterified fatty acids as substrate; is only active on cis-9- and/or cis-12-double bond of C16 and C18 fatty acids without any trans-configurations, producing 10-hydroxy and 10,13-dihydroxy derivatives. Appears to play a role in oleic acid detoxification and bacterial virulence. The sequence is that of Oleate hydratase (sph) from Streptococcus pyogenes serotype M49 (strain NZ131).